The primary structure comprises 394 residues: MNKKSVKDIDVKGKVVFCRVDFNVPMKDGKVTDDTRIRAALPTIEYLTGQGAKVLLASHLGRPKGQVTEELRLTPVAKRLQELLGQEVKKADEAYGDNVKKQISDLKDGDVLVLENVRFYPGEEKNDPELSKAFADLADVYVNDAFGAAHRAHASTAGIAAYLPAVSGFLMQKELEVLGKAISNPDRPFTAIIGGAKVKDKIGVIESLLDKVDNLIIGGGLAYTFVKALGHEVGKSLLEEDKVDLAKSFMDRAKEKGVNFLIPTDVLVADDFSNDANTSIVPISEIPSDLEALDIGTETREKYADVIKNSKLVVWNGPMGVFEIDAFAKGTKAIAEALAEAKDTYSVIGGGDSAAAVEKFGLADQMSHISTGGGASLEFMEGKELPGVTALNDK.

Substrate is bound by residues 21 to 23 (DFN), R36, 59 to 62 (HLGR), R118, and R151. Phosphoserine is present on S183. K201 contributes to the ATP binding site. T299 carries the phosphothreonine modification. ATP-binding positions include E323 and 350–353 (GGDS).

This sequence belongs to the phosphoglycerate kinase family. Monomer.

It localises to the cytoplasm. The enzyme catalyses (2R)-3-phosphoglycerate + ATP = (2R)-3-phospho-glyceroyl phosphate + ADP. Its pathway is carbohydrate degradation; glycolysis; pyruvate from D-glyceraldehyde 3-phosphate: step 2/5. This is Phosphoglycerate kinase from Bacillus pumilus (strain SAFR-032).